We begin with the raw amino-acid sequence, 94 residues long: Cell division topological specificity factor (94 aa).

Belongs to the MinE family.

Its function is as follows. Prevents the cell division inhibition by proteins MinC and MinD at internal division sites while permitting inhibition at polar sites. This ensures cell division at the proper site by restricting the formation of a division septum at the midpoint of the long axis of the cell. This Alkaliphilus metalliredigens (strain QYMF) protein is Cell division topological specificity factor.